The primary structure comprises 388 residues: MKRNFPKLIALSLIFSLSITPIANAESNSNIKAKDKRHVQVNVEDKSVPTDVRNLAQKDYLSYVTSLDKIYNKEKASYTLGEPFKIYKFNKKSDGNYYFPVLNTEGNIDYIVTISPKVTKDSSSSSKYTINVSSFLSKALNEYKDQQITILTNSKGYYVVTQNHKAKLVLKTPRLEDKKAKKTESIPTGNNVTQLKQKASVTMPTSQFKSNNYTYNEQYVNKLENFKIRETQGNNGWCAGYTMSALLNATYNTNKYHAEAVMRFLHPNLQGQQFQFTGLTPREMIYFEQTQGRSPQLLNRMTTYNEVDNLTKNNKGIAILGSRVESRNGMHAGHAMAVVGNAKLNNGQEVIIIWNPWDNGFMTQDAKNNVIPVSNGDHYQWYSSIYGY.

Residues 1–25 (MKRNFPKLIALSLIFSLSITPIANA) form the signal peptide. Positions 26–214 (ESNSNIKAKD…TSQFKSNNYT (189 aa)) are excised as a propeptide. Active-site residues include Cys238, His334, and Asn355.

This sequence belongs to the peptidase C47 family. In terms of assembly, in the cytoplasm, prematurely activated/folded ScpA forms a stable non-covalent complex with ScpB. Cleavage leads to the activation of ScpA probably by an auto-catalytic manner.

Its subcellular location is the secreted. The catalysed reaction is Broad endopeptidase action on proteins including elastin, but rather limited hydrolysis of small-molecule substrates. Assays are conveniently made with hemoglobin, casein or Z-Phe-Arg-NHMec as substrate.. With respect to regulation, prematurely activated/folded staphopain A is inhibited by staphostatin A (ScpB), which is probably required to protect staphylococcal cytoplasmic proteins from degradation by ScpA. Also inactivated by heavy metal ions such as Hg(2+) or Ag(+), iodoacetamide, E-64 and human plasma. Cysteine protease that plays an important role in the inhibition of host innate immune response. Cleaves host elastins found in connective tissues, pulmonary surfactant protein A in the lungs, and the chemokine receptor CXCR2 on leukocytes. Proteolytic cleavage of surfactant protein A impairs bacterial phagocytosis by neutrophils while CXCR2 degradation blocks neutrophil activation and chemotaxis. Additionally, promotes vascular leakage by activating the plasma kallikerin/kinin system, resulting in hypotension. In Staphylococcus aureus, this protein is Staphopain A (sspP).